Consider the following 26-residue polypeptide: Acyl carrier protein (26 aa).

One can recognise a Carrier domain in the interval 2–26 (SDTATRVQKIVVEHLGVESDKVTQE).

It belongs to the acyl carrier protein (ACP) family. Post-translationally, 4'-phosphopantetheine is transferred from CoA to a specific serine of apo-ACP by AcpS. This modification is essential for activity because fatty acids are bound in thioester linkage to the sulfhydryl of the prosthetic group.

The protein resides in the cytoplasm. Its pathway is lipid metabolism; fatty acid biosynthesis. In terms of biological role, carrier of the growing fatty acid chain in fatty acid biosynthesis. This is Acyl carrier protein (acpP) from Erythrobacter longus.